We begin with the raw amino-acid sequence, 294 residues long: Glycine--tRNA ligase alpha subunit (294 aa).

It belongs to the class-II aminoacyl-tRNA synthetase family. As to quaternary structure, tetramer of two alpha and two beta subunits.

The protein resides in the cytoplasm. The catalysed reaction is tRNA(Gly) + glycine + ATP = glycyl-tRNA(Gly) + AMP + diphosphate. The protein is Glycine--tRNA ligase alpha subunit of Natranaerobius thermophilus (strain ATCC BAA-1301 / DSM 18059 / JW/NM-WN-LF).